We begin with the raw amino-acid sequence, 470 residues long: MNPNQKIITIGSISIAIGIISLMLQIGNIISMWASHSIQTGSQNHTGICNQRIITYENSTWVNHTYVNINNTNVVTGKDKTSVTLAGNSSLCSISGWAIYTKDNSIRIGSKGDVFVIREPFISCSHLECRTFFLTQGALLNDKHSNGTVKDRSPYRALMSCPLGEAPSPYNSKFESVAWSASACHDGMGWLTIGISGPDNGAVAVLKYNGIITETIKSWKKRILRTQESECVCVNGSCFTIMTDGPSDGAASYKIFKIEKGKVTKSIELNAPNFHYEECSCYPDTGTVMCVCRDNWHGSNRPWVSFNQNLDYQIGYICSGVFGDNPRPKDGKGSCNPVTVDGADGVKGFSYKYGNGVWIGRTKSNKLRKGFEMIWDPNGWTDTDNDFSVKQDVVAITDWSGYSGSFVQHPELTGLDCIRPCFWVELVRGLPRENATIWTSGSSISFCGVDSDTANWSWPDGAELPFTIDK.

Topologically, residues 1-6 (MNPNQK) are intravirion. Residues 7–27 (IITIGSISIAIGIISLMLQIG) form a helical membrane-spanning segment. The segment at 11 to 33 (GSISIAIGIISLMLQIGNIISMW) is involved in apical transport and lipid raft association. The Virion surface segment spans residues 28-470 (NIISMWASHS…GAELPFTIDK (443 aa)). The hypervariable stalk region stretch occupies residues 36 to 90 (HSIQTGSQNHTGICNQRIITYENSTWVNHTYVNINNTNVVTGKDKTSVTLAGNSS). N-linked (GlcNAc...) asparagine; by host glycosylation is found at Asn-44, Asn-58, Asn-63, Asn-70, and Asn-88. Positions 91–470 (LCSISGWAIY…GAELPFTIDK (380 aa)) are head of neuraminidase. 8 disulfides stabilise this stretch: Cys-92–Cys-417, Cys-124–Cys-129, Cys-184–Cys-231, Cys-233–Cys-238, Cys-279–Cys-292, Cys-281–Cys-290, Cys-318–Cys-335, and Cys-421–Cys-447. Substrate is bound at residue Arg-118. The N-linked (GlcNAc...) asparagine; by host glycan is linked to Asn-146. Catalysis depends on Asp-151, which acts as the Proton donor/acceptor. Position 152 (Arg-152) interacts with substrate. Residue Asn-235 is glycosylated (N-linked (GlcNAc...) asparagine; by host). Position 277 to 278 (277 to 278 (EE)) interacts with substrate. Arg-293 provides a ligand contact to substrate. Asp-294, Gly-298, and Asp-324 together coordinate Ca(2+). A substrate-binding site is contributed by Arg-368. Residue Tyr-402 is the Nucleophile of the active site. Asn-434 and Asn-455 each carry an N-linked (GlcNAc...) asparagine; by host glycan.

It belongs to the glycosyl hydrolase 34 family. Homotetramer. Ca(2+) is required as a cofactor. Post-translationally, N-glycosylated.

It localises to the virion membrane. The protein resides in the host apical cell membrane. The catalysed reaction is Hydrolysis of alpha-(2-&gt;3)-, alpha-(2-&gt;6)-, alpha-(2-&gt;8)- glycosidic linkages of terminal sialic acid residues in oligosaccharides, glycoproteins, glycolipids, colominic acid and synthetic substrates.. Its activity is regulated as follows. Inhibited by the neuraminidase inhibitors zanamivir (Relenza) and oseltamivir (Tamiflu). These drugs interfere with the release of progeny virus from infected cells and are effective against all influenza strains. Resistance to neuraminidase inhibitors is quite rare. Its function is as follows. Catalyzes the removal of terminal sialic acid residues from viral and cellular glycoconjugates. Cleaves off the terminal sialic acids on the glycosylated HA during virus budding to facilitate virus release. Additionally helps virus spread through the circulation by further removing sialic acids from the cell surface. These cleavages prevent self-aggregation and ensure the efficient spread of the progeny virus from cell to cell. Otherwise, infection would be limited to one round of replication. Described as a receptor-destroying enzyme because it cleaves a terminal sialic acid from the cellular receptors. May facilitate viral invasion of the upper airways by cleaving the sialic acid moieties on the mucin of the airway epithelial cells. Likely to plays a role in the budding process through its association with lipid rafts during intracellular transport. May additionally display a raft-association independent effect on budding. Plays a role in the determination of host range restriction on replication and virulence. Sialidase activity in late endosome/lysosome traffic seems to enhance virus replication. The sequence is that of Neuraminidase from Aves (Human).